Consider the following 89-residue polypeptide: Large ribosomal subunit protein bL27 (89 aa).

Positions 1–24 (MAHKKGTGSTRNGRDSRSQRLGVK) are disordered.

Belongs to the bacterial ribosomal protein bL27 family.

The polypeptide is Large ribosomal subunit protein bL27 (Microcystis aeruginosa (strain NIES-843 / IAM M-2473)).